A 173-amino-acid chain; its full sequence is NADH-ubiquinone oxidoreductase chain 6 (173 aa).

The next 5 membrane-spanning stretches (helical) occupy residues 1-21 (MTYFVLFLGLCFVLGGLAVAS), 27-47 (YGVVGLVLASVAGCGWLLSLG), 48-68 (VSFVSLVLFMVYLGGMLVVFV), 87-107 (VVGYGVGFVVVLVVGLVVGGF), and 139-159 (CGVGMFLVAGWGLLLTLFVVL).

It belongs to the complex I subunit 6 family.

It is found in the mitochondrion membrane. The catalysed reaction is a ubiquinone + NADH + 5 H(+)(in) = a ubiquinol + NAD(+) + 4 H(+)(out). Core subunit of the mitochondrial membrane respiratory chain NADH dehydrogenase (Complex I) that is believed to belong to the minimal assembly required for catalysis. Complex I functions in the transfer of electrons from NADH to the respiratory chain. The immediate electron acceptor for the enzyme is believed to be ubiquinone. The protein is NADH-ubiquinone oxidoreductase chain 6 (MT-ND6) of Aethia pygmaea (Whiskered auklet).